A 393-amino-acid polypeptide reads, in one-letter code: Pyruvate dehydrogenase E1 component subunit alpha-2, mitochondrial (393 aa).

A mitochondrion-targeting transit peptide spans 1–28 (MALSRLSSRSNTFLKPAITALPSSIRRH). Pyruvate-binding residues include His-94, Tyr-120, Arg-121, Gly-169, Val-171, Asp-200, Gly-201, Ala-202, Asn-229, and Tyr-231. Positions 120, 121, 169, 171, 200, 201, 202, and 229 each coordinate thiamine diphosphate. Asp-200 is a Mg(2+) binding site. Positions 229 and 231 each coordinate Mg(2+). Position 295 (His-295) interacts with thiamine diphosphate.

As to quaternary structure, tetramer of 2 alpha and 2 beta subunits. The cofactor is thiamine diphosphate. It depends on Mg(2+) as a cofactor.

Its subcellular location is the mitochondrion matrix. It carries out the reaction N(6)-[(R)-lipoyl]-L-lysyl-[protein] + pyruvate + H(+) = N(6)-[(R)-S(8)-acetyldihydrolipoyl]-L-lysyl-[protein] + CO2. With respect to regulation, E1 activity is regulated by phosphorylation (inactivation) and dephosphorylation (activation) of the alpha subunit. Functionally, the pyruvate dehydrogenase complex catalyzes the overall conversion of pyruvate to acetyl-CoA and CO(2). It contains multiple copies of three enzymatic components: pyruvate dehydrogenase (E1), dihydrolipoamide acetyltransferase (E2) and lipoamide dehydrogenase (E3). This chain is Pyruvate dehydrogenase E1 component subunit alpha-2, mitochondrial (IAR4), found in Arabidopsis thaliana (Mouse-ear cress).